Consider the following 128-residue polypeptide: Small ribosomal subunit protein eS8 (128 aa).

It belongs to the eukaryotic ribosomal protein eS8 family. Part of the 30S ribosomal subunit.

The protein is Small ribosomal subunit protein eS8 of Methanococcus vannielii (strain ATCC 35089 / DSM 1224 / JCM 13029 / OCM 148 / SB).